The sequence spans 179 residues: Protein GrpE (179 aa).

This sequence belongs to the GrpE family. Homodimer.

It localises to the cytoplasm. Functionally, participates actively in the response to hyperosmotic and heat shock by preventing the aggregation of stress-denatured proteins, in association with DnaK and GrpE. It is the nucleotide exchange factor for DnaK and may function as a thermosensor. Unfolded proteins bind initially to DnaJ; upon interaction with the DnaJ-bound protein, DnaK hydrolyzes its bound ATP, resulting in the formation of a stable complex. GrpE releases ADP from DnaK; ATP binding to DnaK triggers the release of the substrate protein, thus completing the reaction cycle. Several rounds of ATP-dependent interactions between DnaJ, DnaK and GrpE are required for fully efficient folding. This is Protein GrpE from Rickettsia felis (strain ATCC VR-1525 / URRWXCal2) (Rickettsia azadi).